The following is a 111-amino-acid chain: uncharacterized protein (111 aa).

This is an uncharacterized protein from Saccharolobus solfataricus (strain ATCC 35092 / DSM 1617 / JCM 11322 / P2) (Sulfolobus solfataricus).